The chain runs to 332 residues: Anthranilate phosphoribosyltransferase (332 aa).

5-phospho-alpha-D-ribose 1-diphosphate is bound by residues Gly79, Gly82 to Asp83, Ser87, Asn89 to Thr92, Lys107 to Ser115, and Ser119. An anthranilate-binding site is contributed by Gly79. Ser91 contacts Mg(2+). Asn110 contributes to the anthranilate binding site. An anthranilate-binding site is contributed by Arg165. Positions 223 and 224 each coordinate Mg(2+).

The protein belongs to the anthranilate phosphoribosyltransferase family. In terms of assembly, homodimer. Requires Mg(2+) as cofactor.

It catalyses the reaction N-(5-phospho-beta-D-ribosyl)anthranilate + diphosphate = 5-phospho-alpha-D-ribose 1-diphosphate + anthranilate. Its pathway is amino-acid biosynthesis; L-tryptophan biosynthesis; L-tryptophan from chorismate: step 2/5. Its function is as follows. Catalyzes the transfer of the phosphoribosyl group of 5-phosphorylribose-1-pyrophosphate (PRPP) to anthranilate to yield N-(5'-phosphoribosyl)-anthranilate (PRA). This Yersinia pestis bv. Antiqua (strain Antiqua) protein is Anthranilate phosphoribosyltransferase.